The primary structure comprises 1482 residues: Cystic fibrosis transmembrane conductance regulator (1482 aa).

Residues 1 to 77 (MQRSPLEKAS…KLINALRRCF (77 aa)) lie on the Cytoplasmic side of the membrane. Residues 78–98 (FWRFTFYGIILYLGEVTKAVQ) traverse the membrane as a helical segment. Positions 81-365 (FTFYGIILYL…WAVQTWYDSL (285 aa)) constitute an ABC transmembrane type-1 1 domain. At 99–122 (PLLLGRIIASYDPDNKVERSIAIY) the chain is on the extracellular side. Residues 123-146 (LAVGLCLLFVVRTLLLHPAIFGLH) traverse the membrane as a helical segment. The Cytoplasmic segment spans residues 147–195 (HIGMQMRIAMFSLIYKKTLKLSSRVLDKISIGQLVSLLSNNLNKFDEGL). Residues 196–216 (ALAHFVWIAPLQVTLLMGLLW) form a helical membrane-spanning segment. The Extracellular segment spans residues 217 to 222 (DLLQAS). Residues 223 to 243 (AFSGLGVLIILACFQAGFGRM) form a helical membrane-spanning segment. Residues 244–298 (MMKYRDQRAGKINERLVITSEMIENIQSVKAYCWEEALEKMIENFRQSELRLTRK) are Cytoplasmic-facing. The chain crosses the membrane as a helical span at residues 299–319 (AAYVRYFNSSAFFFSGFFVVF). Topologically, residues 320 to 339 (LSVLPYALIKGIILRKIFTT) are extracellular. Residues 340 to 358 (ISFCIVLRMAVTRQFPWAV) traverse the membrane as a helical segment. Residues 359-859 (QTWYDSLGAI…YLRYITVHKR (501 aa)) are Cytoplasmic-facing. Residues Trp-401, Ser-434, 458–465 (GSTGAGKT), and Gln-493 each bind ATP. Residues 423–646 (NVDNSLFFSN…RPDFSSKLMG (224 aa)) form the ABC transporter 1 domain. The S-palmitoyl cysteine moiety is linked to residue Cys-524. Ser-549 and Ser-660 each carry phosphoserine. A disordered R region region spans residues 654–832 (SAERRNSIIT…EEINEEDLKE (179 aa)). The residue at position 670 (Ser-670) is a Phosphoserine; by PKA. Ser-686 carries the phosphoserine modification. Lys-688 is covalently cross-linked (Glycyl lysine isopeptide (Lys-Gly) (interchain with G-Cter in ubiquitin)). Phosphoserine is present on residues Ser-700 and Ser-712. Position 717 is a phosphothreonine (Thr-717). Residues Ser-737, Ser-768, Ser-796, and Ser-814 each carry the phosphoserine modification. The chain crosses the membrane as a helical span at residues 860–880 (LIFVLIWCFVVFLIEVAASLV). An ABC transmembrane type-1 2 domain is found at 860-1156 (LIFVLIWCFV…AVNSSIDVDS (297 aa)). Residues 881–919 (LLCLLSKVSPEDKGNTTKSANDSSAVIITSTSSFYFLYI) lie on the Extracellular side of the membrane. N-linked (GlcNAc...) asparagine glycosylation is found at Asn-895 and Asn-901. Residues 920–940 (YVGVADTFLALGLFRGLPLVH) form a discontinuously helical membrane-spanning segment. Residues 941-991 (TLITVSKILHHKMLHSVLQAPMSTLNTLKAGGILNRFSKDIAILDDLLPLT) are Cytoplasmic-facing. Residues 992–1012 (IFDFIQLLLIVIGAVAVVSIL) traverse the membrane as a helical segment. Topologically, residues 1013–1014 (KP) are extracellular. Residues 1015–1035 (YIFLATVPVIVAFVLLRAYFL) form a helical membrane-spanning segment. Topologically, residues 1036–1096 (HTSQQLKQLE…TANWFLYLST (61 aa)) are cytoplasmic. The helical transmembrane segment at 1097–1117 (LRWFQMRIEMIFVIFFIAVTF) threads the bilayer. The Extracellular segment spans residues 1118–1131 (ISILTTGEGEGTVG). The helical transmembrane segment at 1132-1152 (IILTLAMNIMSTLQWAVNSSI) threads the bilayer. Residues 1153 to 1482 (DVDSLMRSVS…TEEEVQDTRL (330 aa)) are Cytoplasmic-facing. The ABC transporter 2 domain maps to 1212 to 1445 (MTVKDLTAKY…KSLFRQAISP (234 aa)). Residues Tyr-1221 and 1246 to 1253 (GRTGSGKS) each bind ATP. The segment at 1388–1482 (RTLKQAFADC…TEEEVQDTRL (95 aa)) is interaction with GORASP2. Cys-1397 carries the S-palmitoyl cysteine lipid modification. At Ser-1446 the chain carries Phosphoserine. A disordered region spans residues 1450-1482 (KLFPHQNSGKHKSRSKITALKEETEEEVQDTRL). Acidic residues predominate over residues 1472 to 1482 (ETEEEVQDTRL). The PDZ-binding signature appears at 1480–1482 (TRL).

Belongs to the ABC transporter superfamily. ABCC family. CFTR transporter (TC 3.A.1.202) subfamily. Monomer; does not require oligomerization for channel activity. May form oligomers in the membrane. Interacts with SLC26A3, SLC26A6 and NHERF1. Interacts with SHANK2. Interacts with MYO6. Interacts (via C-terminus) with GOPC (via PDZ domain); this promotes CFTR internalization and thereby decreases channel activity. Interacts with SLC4A7 through NHERF1. Found in a complex with MYO5B and RAB11A. Interacts with ANO1. Interacts with SLC26A8. Interacts with AHCYL1; the interaction increases CFTR activity. Interacts with CSE1L. The core-glycosylated form interacts with GORASP2 (via PDZ GRASP-type 1 domain) in respone to ER stress. Interacts with MARCHF2; the interaction leads to CFTR ubiqtuitination and degradation. Interacts with ADGRG2. Post-translationally, N-glycosylated. In terms of processing, phosphorylated; cAMP treatment promotes phosphorylation and activates the channel. Dephosphorylation decreases the ATPase activity (in vitro). Phosphorylation at PKA sites activates the channel. Phosphorylation at PKC sites enhances the response to phosphorylation by PKA. Phosphorylated by AMPK; this inhibits channel activity. Ubiquitinated, leading to its degradation in the lysosome. Deubiquitination by USP10 in early endosomes enhances its endocytic recycling to the cell membrane. Ubiquitinated by RNF185 during ER stress. Ubiquitinated by MARCHF2.

It localises to the apical cell membrane. The protein resides in the early endosome membrane. Its subcellular location is the cell membrane. It is found in the recycling endosome membrane. The protein localises to the endoplasmic reticulum membrane. It localises to the nucleus. The catalysed reaction is ATP + H2O + closed Cl(-) channel = ADP + phosphate + open Cl(-) channel.. It catalyses the reaction chloride(in) = chloride(out). The enzyme catalyses hydrogencarbonate(in) = hydrogencarbonate(out). It carries out the reaction ATP + H2O = ADP + phosphate + H(+). Functionally, epithelial ion channel that plays an important role in the regulation of epithelial ion and water transport and fluid homeostasis. Mediates the transport of chloride ions across the cell membrane. Possesses an intrinsic ATPase activity and utilizes ATP to gate its channel; the passive flow of anions through the channel is gated by cycles of ATP binding and hydrolysis by the ATP-binding domains. The ion channel is also permeable to HCO(3)(-); selectivity depends on the extracellular chloride concentration. Exerts its function also by modulating the activity of other ion channels and transporters. Contributes to the regulation of the pH and the ion content of the epithelial fluid layer. Modulates the activity of the epithelial sodium channel (ENaC) complex, in part by regulating the cell surface expression of the ENaC complex. May regulate bicarbonate secretion and salvage in epithelial cells by regulating the transporter SLC4A7. Can inhibit the chloride channel activity of ANO1. Plays a role in the chloride and bicarbonate homeostasis during sperm epididymal maturation and capacitation. The chain is Cystic fibrosis transmembrane conductance regulator from Dasypus novemcinctus (Nine-banded armadillo).